Reading from the N-terminus, the 180-residue chain is Regulator of G-protein signaling 8 (180 aa).

Residue serine 26 is modified to Phosphoserine. The RGS domain occupies 56–171 (SFDVLLSHKY…FLRSKMYLDL (116 aa)).

In terms of assembly, interacts with GNAO1. Interacts with GNAI3.

It localises to the cell membrane. It is found in the membrane. Its subcellular location is the perikaryon. The protein resides in the cell projection. The protein localises to the dendrite. It localises to the nucleus. Functionally, regulates G protein-coupled receptor signaling cascades, including signaling via muscarinic acetylcholine receptor CHRM2 and dopamine receptor DRD2. Inhibits signal transduction by increasing the GTPase activity of G protein alpha subunits, thereby driving them into their inactive GDP-bound form. Modulates the activity of potassium channels that are activated in response to DRD2 and CHRM2 signaling. The sequence is that of Regulator of G-protein signaling 8 (RGS8) from Homo sapiens (Human).